A 265-amino-acid polypeptide reads, in one-letter code: Exosome complex component Rrp4 (265 aa).

The 73-residue stretch at 65-137 (GDNVIGKIVD…EVNNIDLTTK (73 aa)) folds into the S1 motif domain. A KH domain is found at 147–205 (KGGQIVKITPSRVPRVIGRGGSMINMIKKLTMTRIIVGQNGWIWVSGKNDALEKLAIEA). The disordered stretch occupies residues 241–265 (EIPKLEEEPQGEDEVNGNDGEARGA).

Belongs to the RRP4 family. In terms of assembly, component of the archaeal exosome complex. Forms a trimer of Rrp4 and/or Csl4 subunits. The trimer associates with a hexameric ring-like arrangement composed of 3 Rrp41-Rrp42 heterodimers.

The protein localises to the cytoplasm. Its function is as follows. Non-catalytic component of the exosome, which is a complex involved in RNA degradation. Increases the RNA binding and the efficiency of RNA degradation. Confers strong poly(A) specificity to the exosome. This is Exosome complex component Rrp4 from Pyrococcus abyssi (strain GE5 / Orsay).